Reading from the N-terminus, the 582-residue chain is 2-succinyl-5-enolpyruvyl-6-hydroxy-3-cyclohexene-1-carboxylate synthase (582 aa).

Belongs to the TPP enzyme family. MenD subfamily. In terms of assembly, homodimer. Mg(2+) is required as a cofactor. Mn(2+) serves as cofactor. The cofactor is thiamine diphosphate.

It catalyses the reaction isochorismate + 2-oxoglutarate + H(+) = 5-enolpyruvoyl-6-hydroxy-2-succinyl-cyclohex-3-ene-1-carboxylate + CO2. Its pathway is quinol/quinone metabolism; 1,4-dihydroxy-2-naphthoate biosynthesis; 1,4-dihydroxy-2-naphthoate from chorismate: step 2/7. The protein operates within cofactor biosynthesis; phylloquinone biosynthesis. Its function is as follows. Catalyzes the thiamine diphosphate-dependent decarboxylation of 2-oxoglutarate and the subsequent addition of the resulting succinic semialdehyde-thiamine pyrophosphate anion to isochorismate to yield 2-succinyl-5-enolpyruvyl-6-hydroxy-3-cyclohexene-1-carboxylate (SEPHCHC). The chain is 2-succinyl-5-enolpyruvyl-6-hydroxy-3-cyclohexene-1-carboxylate synthase from Synechococcus elongatus (strain ATCC 33912 / PCC 7942 / FACHB-805) (Anacystis nidulans R2).